Consider the following 528-residue polypeptide: Lysine--tRNA ligase (528 aa).

The short motif at 44–52 (PSGLPHIGT) is the 'HIGH' region element. Residues 290-294 (KISKS) carry the 'KMSKS' region motif. Lys-293 contributes to the ATP binding site.

This sequence belongs to the class-I aminoacyl-tRNA synthetase family.

Its subcellular location is the cytoplasm. It carries out the reaction tRNA(Lys) + L-lysine + ATP = L-lysyl-tRNA(Lys) + AMP + diphosphate. In Rickettsia prowazekii (strain Madrid E), this protein is Lysine--tRNA ligase (lysS).